The primary structure comprises 343 residues: MSDEDDLEDSEPDQDDSEKEEDEKETEEGEDYRKEGEEFPEEWLPTPLTEDMMKEGLSLLCKTGNGLAHAYVKLEVKERDLTDIYLLRSYIHLRYVDISENHLTDLSPLNYLTHLLWLKADGNRLRSAQMNELPYLQIASFAYNQITDTEGISHPRLETLNLKGNSIHMVTGLDPEKLISLHTVELRGNQLESTLGINLPKLKNLYLAQNMLKKVEGLEDLSNLTTLHLRDNQIDTLSGFSREMKSLQYLNLRGNMVANLGELAKLRDLPKLRALVLLDNPCTDETSYRQEALVQMPYLERLDKEFYEEEERAEADVIRQRLKEEKEQEPEPQRDLEPEQSLI.

The span at 1–30 shows a compositional bias: acidic residues; that stretch reads MSDEDDLEDSEPDQDDSEKEEDEKETEEGE. The interval 1–47 is disordered; it reads MSDEDDLEDSEPDQDDSEKEEDEKETEEGEDYRKEGEEFPEEWLPTP. LRR repeat units lie at residues 92–113, 114–134, 135–155, 156–177, 180–200, 201–222, 223–244, and 246–267; these read HLRYVDISENHLTDLSPLNYLT, HLLWLKADGNRLRSAQMNELP, YLQIASFAYNQITDTEGISHP, RLETLNLKGNSIHMVTGLDPEK, SLHTVELRGNQLESTLGINLP, KLKNLYLAQNMLKKVEGLEDLS, NLTTLHLRDNQIDTLSGFSREM, and SLQYLNLRGNMVANLGELAKLR. The interval 208-343 is interaction with RSPH9; the sequence is AQNMLKKVEG…RDLEPEQSLI (136 aa). The LRRCT domain maps to 280-318; sequence NPCTDETSYRQEALVQMPYLERLDKEFYEEEERAEADVI. Residues 307 to 329 are a coiled coil; that stretch reads YEEEERAEADVIRQRLKEEKEQE. The span at 318-337 shows a compositional bias: basic and acidic residues; sequence IRQRLKEEKEQEPEPQRDLE. A disordered region spans residues 318 to 343; that stretch reads IRQRLKEEKEQEPEPQRDLEPEQSLI.

Component of the axonemal radial spoke complex. Interacts with RSPH3. Interacts with RSPH9. Expressed in spermatozoa.

It is found in the cell projection. It localises to the cilium. The protein resides in the flagellum. Its subcellular location is the cytoplasm. The protein localises to the cytoskeleton. It is found in the flagellum axoneme. Essential for sperm motility and male fertility. Plays an important role in the proper assembly of the third radial spoke (RS3) head and the bridge structure between RS2 and RS3 in the sperm flagella. This is Leucine-rich repeat-containing protein 23 (LRRC23) from Homo sapiens (Human).